Reading from the N-terminus, the 229-residue chain is Large ribosomal subunit protein uL1 (229 aa).

This sequence belongs to the universal ribosomal protein uL1 family. In terms of assembly, part of the 50S ribosomal subunit.

Functionally, binds directly to 23S rRNA. The L1 stalk is quite mobile in the ribosome, and is involved in E site tRNA release. Its function is as follows. Protein L1 is also a translational repressor protein, it controls the translation of the L11 operon by binding to its mRNA. The sequence is that of Large ribosomal subunit protein uL1 from Enterococcus faecalis (strain ATCC 700802 / V583).